Consider the following 390-residue polypeptide: Lipid-A-disaccharide synthase (390 aa).

It belongs to the LpxB family.

The catalysed reaction is a lipid X + a UDP-2-N,3-O-bis[(3R)-3-hydroxyacyl]-alpha-D-glucosamine = a lipid A disaccharide + UDP + H(+). Its pathway is bacterial outer membrane biogenesis; LPS lipid A biosynthesis. Functionally, condensation of UDP-2,3-diacylglucosamine and 2,3-diacylglucosamine-1-phosphate to form lipid A disaccharide, a precursor of lipid A, a phosphorylated glycolipid that anchors the lipopolysaccharide to the outer membrane of the cell. In Haemophilus influenzae (strain ATCC 51907 / DSM 11121 / KW20 / Rd), this protein is Lipid-A-disaccharide synthase (lpxB).